The following is a 306-amino-acid chain: Methylated RNA-binding protein 1 (306 aa).

In terms of domain architecture, YTH spans 155–290 (SRFFVIKSSS…SIGISIINLF (136 aa)). RNA is bound by residues 161 to 163 (KSS), Asn-207, and Trp-231.

Functionally, RNA-binding protein that acts as a post-transcriptional regulator of phosphate metabolism by binding to the 3'-UTR region of PHO4 mRNA, decreasing its stability. Acts by recognizing and binding N6-methyladenosine (m6A)-containing RNAs, a modification present at internal sites of mRNAs and some non-coding RNAs. This Saccharomyces cerevisiae (strain ATCC 204508 / S288c) (Baker's yeast) protein is Methylated RNA-binding protein 1.